Consider the following 414-residue polypeptide: Secernin-1 (414 aa).

At Ala-2 the chain carries N-acetylalanine. Cys-9 is an active-site residue.

This sequence belongs to the peptidase C69 family. Secernin subfamily.

The protein localises to the cytoplasm. In terms of biological role, regulates exocytosis in mast cells. Increases both the extent of secretion and the sensitivity of mast cells to stimulation with calcium. The sequence is that of Secernin-1 (SCRN1) from Bos taurus (Bovine).